The chain runs to 265 residues: Triosephosphate isomerase (265 aa).

13–15 (NWK) serves as a coordination point for substrate. Residue histidine 106 is the Electrophile of the active site. Glutamate 179 (proton acceptor) is an active-site residue. Residues glycine 185, serine 223, and 244–245 (GG) contribute to the substrate site.

The protein belongs to the triosephosphate isomerase family. In terms of assembly, homodimer.

It is found in the cytoplasm. It carries out the reaction D-glyceraldehyde 3-phosphate = dihydroxyacetone phosphate. It participates in carbohydrate biosynthesis; gluconeogenesis. Its pathway is carbohydrate degradation; glycolysis; D-glyceraldehyde 3-phosphate from glycerone phosphate: step 1/1. Functionally, involved in the gluconeogenesis. Catalyzes stereospecifically the conversion of dihydroxyacetone phosphate (DHAP) to D-glyceraldehyde-3-phosphate (G3P). The protein is Triosephosphate isomerase of Acinetobacter baylyi (strain ATCC 33305 / BD413 / ADP1).